Reading from the N-terminus, the 422-residue chain is Transcription termination factor Rho (422 aa).

The Rho RNA-BD domain maps to 52–127 (EVGGDGVLEV…TRVTKINFDD (76 aa)). Residues 173-178 (GKGQRG), 185-190 (RTGKTV), and Arg216 contribute to the ATP site.

It belongs to the Rho family. As to quaternary structure, homohexamer. The homohexamer assembles into an open ring structure.

Its function is as follows. Facilitates transcription termination by a mechanism that involves Rho binding to the nascent RNA, activation of Rho's RNA-dependent ATPase activity, and release of the mRNA from the DNA template. The polypeptide is Transcription termination factor Rho (Cereibacter sphaeroides (strain ATCC 17023 / DSM 158 / JCM 6121 / CCUG 31486 / LMG 2827 / NBRC 12203 / NCIMB 8253 / ATH 2.4.1.) (Rhodobacter sphaeroides)).